A 436-amino-acid polypeptide reads, in one-letter code: Carboxypeptidase A5 (436 aa).

Residues 1–33 form the signal peptide; that stretch reads MQGTPGGGTRPGPSPVDRRTLLVFSFILAAALG. A propeptide spans 34-126 (activation peptide); that stretch reads QMNFTGDQVL…ERQAMAKSRR (93 aa). The 294-residue stretch at 138 to 431 folds into the Peptidase M14 domain; that stretch reads SYHTLEEIYS…MALRTIMEHT (294 aa). Zn(2+)-binding residues include His-196 and Glu-199. Substrate contacts are provided by residues 196 to 199, Arg-254, and 271 to 272; these read HSRE and NR. Cys-265 and Cys-288 are oxidised to a cystine. A Zn(2+)-binding site is contributed by His-323. Substrate-binding positions include 324–325 and Tyr-375; that span reads SY. Glu-397 acts as the Proton donor/acceptor in catalysis.

Belongs to the peptidase M14 family. Requires Zn(2+) as cofactor. In terms of tissue distribution, expression is very low or not detectable.

It is found in the secreted. The protein is Carboxypeptidase A5 (CPA5) of Homo sapiens (Human).